Consider the following 235-residue polypeptide: MHSNLPGYWLVYSIRVLAIECIRLAPEYLPFEEGWRMQQELHKKITESQTNKNRQASMIFCEHEPVYTAGARTRSWEMPQNEKVIRVGRGGKITWHGPGQLVGYPILSLGATPDVLRYVRQIEEGLINALQSVGINGFRIAGRSGVWVRNGVSDEKVAAIGVRVQKNVTLHGFALNCSNDLAPFEKIVPCGISDAGVTTISRILKRTITPKEILDSVFNSICSALEYINTCRGNV.

The 178-residue stretch at 52-229 folds into the BPL/LPL catalytic domain; sequence KNRQASMIFC…SICSALEYIN (178 aa). Substrate contacts are provided by residues 89–96, 159–161, and 172–174; these read RGGKITWH, AIG, and GFA. The active-site Acyl-thioester intermediate is Cys-190.

The protein belongs to the LipB family.

The protein localises to the cytoplasm. The enzyme catalyses octanoyl-[ACP] + L-lysyl-[protein] = N(6)-octanoyl-L-lysyl-[protein] + holo-[ACP] + H(+). Its pathway is protein modification; protein lipoylation via endogenous pathway; protein N(6)-(lipoyl)lysine from octanoyl-[acyl-carrier-protein]: step 1/2. In terms of biological role, catalyzes the transfer of endogenously produced octanoic acid from octanoyl-acyl-carrier-protein onto the lipoyl domains of lipoate-dependent enzymes. Lipoyl-ACP can also act as a substrate although octanoyl-ACP is likely to be the physiological substrate. This Tropheryma whipplei (strain Twist) (Whipple's bacillus) protein is Octanoyltransferase.